A 363-amino-acid chain; its full sequence is Pyrimidine monooxygenase RutA (363 aa).

FMN is bound by residues 49-50, Asn115, Glu124, 140-141, and Ser190; these read IK and RY.

This sequence belongs to the NtaA/SnaA/DszA monooxygenase family. RutA subfamily.

It carries out the reaction uracil + FMNH2 + NADH + O2 = (Z)-3-ureidoacrylate + FMN + NAD(+) + H2O + H(+). The enzyme catalyses thymine + FMNH2 + NADH + O2 = (Z)-2-methylureidoacrylate + FMN + NAD(+) + H2O + H(+). Catalyzes the pyrimidine ring opening between N-3 and C-4 by an unusual flavin hydroperoxide-catalyzed mechanism, adding oxygen atoms in the process to yield ureidoacrylate peracid, that immediately reacts with FMN forming ureidoacrylate and FMN-N(5)-oxide. The FMN-N(5)-oxide reacts spontaneously with NADH to produce FMN. Requires the flavin reductase RutF to regenerate FMN in vivo. In Enterobacter cloacae subsp. cloacae (strain ATCC 13047 / DSM 30054 / NBRC 13535 / NCTC 10005 / WDCM 00083 / NCDC 279-56), this protein is Pyrimidine monooxygenase RutA.